Consider the following 40-residue polypeptide: Large ribosomal subunit protein bL36 (40 aa).

Belongs to the bacterial ribosomal protein bL36 family.

In Corynebacterium diphtheriae (strain ATCC 700971 / NCTC 13129 / Biotype gravis), this protein is Large ribosomal subunit protein bL36.